We begin with the raw amino-acid sequence, 222 residues long: Phosphate-specific transport system accessory protein PhoU homolog 1 (222 aa).

This sequence belongs to the PhoU family. Homodimer.

The protein localises to the cytoplasm. Plays a role in the regulation of phosphate uptake. This chain is Phosphate-specific transport system accessory protein PhoU homolog 1 (phoU1), found in Mycobacterium leprae (strain TN).